We begin with the raw amino-acid sequence, 360 residues long: Peptide chain release factor 1 (360 aa).

Residue Gln-235 is modified to N5-methylglutamine.

The protein belongs to the prokaryotic/mitochondrial release factor family. Methylated by PrmC. Methylation increases the termination efficiency of RF1.

It is found in the cytoplasm. Peptide chain release factor 1 directs the termination of translation in response to the peptide chain termination codons UAG and UAA. The chain is Peptide chain release factor 1 from Paraburkholderia phymatum (strain DSM 17167 / CIP 108236 / LMG 21445 / STM815) (Burkholderia phymatum).